The primary structure comprises 243 residues: Geranylgeranylglyceryl phosphate synthase (243 aa).

Mg(2+)-binding residues include D29 and S58. Sn-glycerol 1-phosphate contacts are provided by residues 178-184, 209-210, and 231-232; these read YLEAGSG, GG, and GT.

It belongs to the GGGP/HepGP synthase family. Group II subfamily. In terms of assembly, homodimer. Mg(2+) is required as a cofactor.

The catalysed reaction is sn-glycerol 1-phosphate + (2E,6E,10E)-geranylgeranyl diphosphate = sn-3-O-(geranylgeranyl)glycerol 1-phosphate + diphosphate. Its function is as follows. Prenyltransferase that catalyzes the transfer of the geranylgeranyl moiety of geranylgeranyl diphosphate (GGPP) to the C3 hydroxyl of sn-glycerol-1-phosphate (G1P). The sequence is that of Geranylgeranylglyceryl phosphate synthase from Flavobacterium johnsoniae (strain ATCC 17061 / DSM 2064 / JCM 8514 / BCRC 14874 / CCUG 350202 / NBRC 14942 / NCIMB 11054 / UW101) (Cytophaga johnsonae).